A 349-amino-acid chain; its full sequence is GTP 3',8-cyclase (349 aa).

The region spanning 26–245 (GFGRAVTYLR…SSFWTLTDIP (220 aa)) is the Radical SAM core domain. R35 contacts GTP. Positions 42 and 46 each coordinate [4Fe-4S] cluster. Y48 is a binding site for S-adenosyl-L-methionine. C49 is a binding site for [4Fe-4S] cluster. R84 provides a ligand contact to GTP. Residue G88 participates in S-adenosyl-L-methionine binding. Residue T118 participates in GTP binding. An S-adenosyl-L-methionine-binding site is contributed by S142. K178 is a binding site for GTP. M212 is a binding site for S-adenosyl-L-methionine. [4Fe-4S] cluster is bound by residues C275 and C278. 280 to 282 (RVR) lines the GTP pocket. Position 292 (C292) interacts with [4Fe-4S] cluster.

This sequence belongs to the radical SAM superfamily. MoaA family. As to quaternary structure, monomer and homodimer. [4Fe-4S] cluster is required as a cofactor.

It carries out the reaction GTP + AH2 + S-adenosyl-L-methionine = (8S)-3',8-cyclo-7,8-dihydroguanosine 5'-triphosphate + 5'-deoxyadenosine + L-methionine + A + H(+). The protein operates within cofactor biosynthesis; molybdopterin biosynthesis. In terms of biological role, catalyzes the cyclization of GTP to (8S)-3',8-cyclo-7,8-dihydroguanosine 5'-triphosphate. This Caulobacter vibrioides (strain ATCC 19089 / CIP 103742 / CB 15) (Caulobacter crescentus) protein is GTP 3',8-cyclase.